The primary structure comprises 617 residues: Chaperone protein HscA homolog (617 aa).

It belongs to the heat shock protein 70 family.

Probable chaperone. Has a low intrinsic ATPase activity which is markedly stimulated by HscB. The polypeptide is Chaperone protein HscA homolog (Vibrio parahaemolyticus serotype O3:K6 (strain RIMD 2210633)).